The primary structure comprises 318 residues: 1-aminocyclopropane-1-carboxylate oxidase 1 (318 aa).

The 102-residue stretch at 153-254 (PTFGTKVSNY…RMSIASFYNP (102 aa)) folds into the Fe2OG dioxygenase domain. Residues histidine 177, aspartate 179, and histidine 234 each contribute to the Fe cation site.

This sequence belongs to the iron/ascorbate-dependent oxidoreductase family. Fe cation serves as cofactor. In terms of tissue distribution, fruit.

It catalyses the reaction 1-aminocyclopropane-1-carboxylate + L-ascorbate + O2 = ethene + L-dehydroascorbate + hydrogen cyanide + CO2 + 2 H2O. The protein operates within alkene biosynthesis; ethylene biosynthesis via S-adenosyl-L-methionine; ethylene from S-adenosyl-L-methionine: step 2/2. The protein is 1-aminocyclopropane-1-carboxylate oxidase 1 (ACO1) of Cucumis melo (Muskmelon).